A 155-amino-acid polypeptide reads, in one-letter code: MPLSKTLVQKLQQAGMAIANNQPQIKFTPLSISDEKGKVALDLNIALVPNPKFDLMHSGLYKQFKDFSINFDVNKETAISLLSKFVPENQKQDLVYRMDELIAEGEANGIIVNTDKTVTLTLALENNDLKLNGKPIPEEQLKVVLFILVMGGFGR.

A signal peptide spans 1-19 (MPLSKTLVQKLQQAGMAIA).

This is an uncharacterized protein from Haemophilus influenzae (strain ATCC 51907 / DSM 11121 / KW20 / Rd).